The following is a 565-amino-acid chain: NAD-dependent malic enzyme (565 aa).

The active-site Proton donor is Y104. R157 contacts NAD(+). K175 functions as the Proton acceptor in the catalytic mechanism. A divalent metal cation contacts are provided by E246, D247, and D270. D270 and N418 together coordinate NAD(+).

It belongs to the malic enzymes family. In terms of assembly, homotetramer. The cofactor is Mg(2+). Mn(2+) serves as cofactor.

The enzyme catalyses (S)-malate + NAD(+) = pyruvate + CO2 + NADH. The catalysed reaction is oxaloacetate + H(+) = pyruvate + CO2. In Sodalis glossinidius (strain morsitans), this protein is NAD-dependent malic enzyme.